Consider the following 56-residue polypeptide: Large ribosomal subunit protein bL33 (56 aa).

It belongs to the bacterial ribosomal protein bL33 family.

In Delftia acidovorans (strain DSM 14801 / SPH-1), this protein is Large ribosomal subunit protein bL33.